The primary structure comprises 382 residues: Lipid-A-disaccharide synthase (382 aa).

The protein belongs to the LpxB family.

The catalysed reaction is 2-N,3-O-bis[(3R)-3-hydroxytetradecanoyl]-alpha-D-glucosaminyl 1-phosphate + UDP-2-N,3-O-bis[(3R)-3-hydroxytetradecanoyl]-alpha-D-glucosamine = lipid A disaccharide (E. coli) + UDP + H(+). It carries out the reaction a lipid X + a UDP-2-N,3-O-bis[(3R)-3-hydroxyacyl]-alpha-D-glucosamine = a lipid A disaccharide + UDP + H(+). The protein operates within glycolipid biosynthesis; lipid IV(A) biosynthesis; lipid IV(A) from (3R)-3-hydroxytetradecanoyl-[acyl-carrier-protein] and UDP-N-acetyl-alpha-D-glucosamine: step 5/6. Functionally, condensation of UDP-2,3-diacylglucosamine and 2,3-diacylglucosamine-1-phosphate to form lipid A disaccharide, a precursor of lipid A, a phosphorylated glycolipid that anchors the lipopolysaccharide to the outer membrane of the cell. In Escherichia coli O17:K52:H18 (strain UMN026 / ExPEC), this protein is Lipid-A-disaccharide synthase.